We begin with the raw amino-acid sequence, 171 residues long: uncharacterized protein (171 aa).

Residues 21–43 (GVAASLLILLAVYTIFQSTVVIA) traverse the membrane as a helical segment.

The protein localises to the membrane. This is an uncharacterized protein from Archaeoglobus fulgidus (strain ATCC 49558 / DSM 4304 / JCM 9628 / NBRC 100126 / VC-16).